Consider the following 192-residue polypeptide: dTTP/UTP pyrophosphatase (192 aa).

The active-site Proton acceptor is the Asp-65.

This sequence belongs to the Maf family. YhdE subfamily. Requires a divalent metal cation as cofactor.

It is found in the cytoplasm. It carries out the reaction dTTP + H2O = dTMP + diphosphate + H(+). It catalyses the reaction UTP + H2O = UMP + diphosphate + H(+). Nucleoside triphosphate pyrophosphatase that hydrolyzes dTTP and UTP. May have a dual role in cell division arrest and in preventing the incorporation of modified nucleotides into cellular nucleic acids. This Fusobacterium nucleatum subsp. nucleatum (strain ATCC 25586 / DSM 15643 / BCRC 10681 / CIP 101130 / JCM 8532 / KCTC 2640 / LMG 13131 / VPI 4355) protein is dTTP/UTP pyrophosphatase.